A 443-amino-acid polypeptide reads, in one-letter code: MVKERRTELVQGFRHSVPYINTHRGKTFVIMLGGEAIEHENFSSIVNDIGLLHSLGIRLVVVYGARPQIDANLAAHHHEPIYHKHTRVTDAKTLELVKQAAGLLQLDITARLSMSLNNTPLQGAHINVVSGNFIISQPLGVDDGVDYCHSGRIRRIDEEAIHRQLDSGAIVLMGPVAVSVTGESFNLTSEEVATQLAIKLKAEKMIGFCSSQGVFDEQGNIVSELFPNEAQARVETLEAEGDYHSGTVRFLRGAVKACRSGVRRSHLISYQEDGALLQELFSRDGIGTQIVMESAEQIRRATINDIGGILELIRPLEQQGILVRRSREQLEMEIDKFTIIQRDNLTIACAALYPFPEEKIGEMACVAVHPDYRSSSRGEVLLERVAAQARQIGLSKLFVLTTRSIHWFQERGFTPVDIDSLPESKKEMYNYQRRSKVLMADLG.

The N-acetyltransferase domain occupies Glu-296–Ser-435.

It belongs to the acetyltransferase family. ArgA subfamily. As to quaternary structure, homohexamer.

Its subcellular location is the cytoplasm. It catalyses the reaction L-glutamate + acetyl-CoA = N-acetyl-L-glutamate + CoA + H(+). It functions in the pathway amino-acid biosynthesis; L-arginine biosynthesis; N(2)-acetyl-L-ornithine from L-glutamate: step 1/4. The chain is Amino-acid acetyltransferase from Enterobacter sp. (strain 638).